Here is a 168-residue protein sequence, read N- to C-terminus: Disulfide bond formation protein B (168 aa).

Residues 1–13 are Cytoplasmic-facing; it reads MFLTYFDAMPRRV. Residues 14-30 traverse the membrane as a helical segment; sequence LALVSLACVALLAFGLY. The Periplasmic portion of the chain corresponds to 31-48; that stretch reads LQHVVGLEPCPMCIVQRY. Residues Cys-40 and Cys-43 are joined by a disulfide bond. A helical membrane pass occupies residues 49–64; it reads ALVLVAVVAGITAVAK. The Cytoplasmic segment spans residues 65 to 70; the sequence is SRGLLI. A helical membrane pass occupies residues 71–88; that stretch reads TGSGLLVLLSGFGAFVAA. Residues 89–144 lie on the Periplasmic side of the membrane; sequence RQSFLQWYPPEVASCGRDFYGMIETFPLKRAIPMIFKGSGDCTKIDWTFLGLSIAN. A disulfide bridge connects residues Cys-103 and Cys-130. Residues 145–163 form a helical membrane-spanning segment; it reads WSFLCFVAIALVGLVLITR. Topologically, residues 164–168 are cytoplasmic; that stretch reads LARQR.

The protein belongs to the DsbB family.

It localises to the cell inner membrane. In terms of biological role, required for disulfide bond formation in some periplasmic proteins. Acts by oxidizing the DsbA protein. This Polaromonas sp. (strain JS666 / ATCC BAA-500) protein is Disulfide bond formation protein B.